Consider the following 151-residue polypeptide: 6,7-dimethyl-8-ribityllumazine synthase (151 aa).

5-amino-6-(D-ribitylamino)uracil-binding positions include F15, 49–51 (AVE), and 73–75 (AVI). Position 78-79 (78-79 (ET)) interacts with (2S)-2-hydroxy-3-oxobutyl phosphate. Residue H81 is the Proton donor of the active site. F106 contacts 5-amino-6-(D-ribitylamino)uracil. R120 contributes to the (2S)-2-hydroxy-3-oxobutyl phosphate binding site.

Belongs to the DMRL synthase family. Forms an icosahedral capsid composed of 60 subunits, arranged as a dodecamer of pentamers.

It carries out the reaction (2S)-2-hydroxy-3-oxobutyl phosphate + 5-amino-6-(D-ribitylamino)uracil = 6,7-dimethyl-8-(1-D-ribityl)lumazine + phosphate + 2 H2O + H(+). The protein operates within cofactor biosynthesis; riboflavin biosynthesis; riboflavin from 2-hydroxy-3-oxobutyl phosphate and 5-amino-6-(D-ribitylamino)uracil: step 1/2. Functionally, catalyzes the formation of 6,7-dimethyl-8-ribityllumazine by condensation of 5-amino-6-(D-ribitylamino)uracil with 3,4-dihydroxy-2-butanone 4-phosphate. This is the penultimate step in the biosynthesis of riboflavin. The sequence is that of 6,7-dimethyl-8-ribityllumazine synthase from Coxiella burnetii (strain Dugway 5J108-111).